The following is a 157-amino-acid chain: S-ribosylhomocysteine lyase (157 aa).

3 residues coordinate Fe cation: His53, His57, and Cys124.

The protein belongs to the LuxS family. Homodimer. The cofactor is Fe cation.

It carries out the reaction S-(5-deoxy-D-ribos-5-yl)-L-homocysteine = (S)-4,5-dihydroxypentane-2,3-dione + L-homocysteine. In terms of biological role, involved in the synthesis of autoinducer 2 (AI-2) which is secreted by bacteria and is used to communicate both the cell density and the metabolic potential of the environment. The regulation of gene expression in response to changes in cell density is called quorum sensing. Catalyzes the transformation of S-ribosylhomocysteine (RHC) to homocysteine (HC) and 4,5-dihydroxy-2,3-pentadione (DPD). This chain is S-ribosylhomocysteine lyase, found in Borrelia garinii subsp. bavariensis (strain ATCC BAA-2496 / DSM 23469 / PBi) (Borreliella bavariensis).